A 165-amino-acid chain; its full sequence is (2E)-enoyl-[ACP] glycyltransferase (165 aa).

This sequence belongs to the FcoT family.

It carries out the reaction a (3R)-3-[(carboxymethyl)amino]fatty acid + holo-[ACP] + H(+) = a (2E)-enoyl-[ACP] + glycine + H2O. The enzyme catalyses (3R)-3-[(carboxymethyl)amino]butanoate + holo-[ACP] + H(+) = (2E)-butenoyl-[ACP] + glycine + H2O. Involved in the biosynthesis of a unique class of isonitrile lipopeptides (INLPs). Catalyzes a Michael addition of glycine to the beta-position of an alpha,beta-unsaturated fatty acyl-[ACP], producing a (3R)-3-[(carboxymethyl)amino]fatty acid. Acts on the (2E)-butenoyl moiety loaded on the acyl-carrier protein ScoB, forming the product (3R)-3-[(carboxymethyl)amino]butanoate released from ScoB. This chain is (2E)-enoyl-[ACP] glycyltransferase, found in Streptomyces coeruleorubidus.